A 1055-amino-acid chain; its full sequence is Kinesin-like protein KIN-7D, mitochondrial (1055 aa).

Residues 1 to 23 (MASSSSRTRSSRPPSPASSTSSS) show a composition bias toward low complexity. The tract at residues 1–36 (MASSSSRTRSSRPPSPASSTSSSHLSNRLIPRSNST) is disordered. Residues 1–96 (MASSSSRTRS…PMDDTISSER (96 aa)) constitute a mitochondrion transit peptide. One can recognise a Kinesin motor domain in the interval 98 to 415 (SISVTVRFRP…LKFASRAKSI (318 aa)). 178–185 (GVTSSGKT) serves as a coordination point for ATP. Coiled-coil stretches lie at residues 419-503 (ASRN…ILVS), 618-653 (PENS…GEAS), and 694-823 (LQEK…LAQT). The segment at 826-856 (PMNGVNRKYNDGARSGRKGRISSSRSSGDEF) is disordered. Positions 880–911 (LESALAEKEFIEDEYRKKAEEAKRREEALEND) form a coiled coil. The interval 926–963 (NGALPEPNGTDPGRELEKSQSHAVLKERQVSSAPRQPE) is disordered. The segment covering 937 to 954 (PGRELEKSQSHAVLKERQ) has biased composition (basic and acidic residues). The segment at 1008-1043 (CKVCFESPTAAILLPCRHFCLCKSCSLACSECPICR) adopts an RING-type zinc-finger fold.

This sequence belongs to the TRAFAC class myosin-kinesin ATPase superfamily. Kinesin family. KIN-7 subfamily.

The protein localises to the mitochondrion. The chain is Kinesin-like protein KIN-7D, mitochondrial from Arabidopsis thaliana (Mouse-ear cress).